The chain runs to 118 residues: 5-hydroxyisourate hydrolase (118 aa).

The substrate site is built by His-7, Arg-46, and Tyr-115.

Belongs to the transthyretin family. 5-hydroxyisourate hydrolase subfamily. Homotetramer.

The enzyme catalyses 5-hydroxyisourate + H2O = 5-hydroxy-2-oxo-4-ureido-2,5-dihydro-1H-imidazole-5-carboxylate + H(+). Its function is as follows. Catalyzes the hydrolysis of 5-hydroxyisourate (HIU) to 2-oxo-4-hydroxy-4-carboxy-5-ureidoimidazoline (OHCU). The protein is 5-hydroxyisourate hydrolase of Brucella melitensis biotype 1 (strain ATCC 23456 / CCUG 17765 / NCTC 10094 / 16M).